The chain runs to 236 residues: UPF0502 protein Bxeno_B1639 (236 aa).

Belongs to the UPF0502 family.

The chain is UPF0502 protein Bxeno_B1639 from Paraburkholderia xenovorans (strain LB400).